A 428-amino-acid polypeptide reads, in one-letter code: Elongation factor 1-alpha (428 aa).

Residues 5–215 (KPHINIVFIG…ALDQMPEPPK (211 aa)) enclose the tr-type G domain. Positions 14 to 21 (GHVDHGKS) are G1. 14-21 (GHVDHGKS) is a binding site for GTP. Mg(2+) is bound at residue S21. The interval 68–72 (GITID) is G2. The segment at 89–92 (DAPG) is G3. GTP-binding positions include 89–93 (DAPGH) and 144–147 (NKMD). Positions 144 to 147 (NKMD) are G4. The interval 181-183 (SAW) is G5.

The protein belongs to the TRAFAC class translation factor GTPase superfamily. Classic translation factor GTPase family. EF-Tu/EF-1A subfamily.

The protein resides in the cytoplasm. It catalyses the reaction GTP + H2O = GDP + phosphate + H(+). Functionally, GTP hydrolase that promotes the GTP-dependent binding of aminoacyl-tRNA to the A-site of ribosomes during protein biosynthesis. In Thermococcus celer, this protein is Elongation factor 1-alpha.